We begin with the raw amino-acid sequence, 443 residues long: MGQGPSGGLNRQGDRKPDGGDKKEKKFEPAAPPARVGRKQRKQKGPEAAARLPTVTPSTKCKLRLLKLERIKDYLLMEEEFVANQERLKPQEEKAEEDRSKVDDLRGTPMSVGNLEELIDENHAIVSSSVGPEYYVGILSFVDKDQLEPGCSILMHNKVLSVVGILQDEVDPMVSVMKVEKAPLESYADIGGLEAQIQEIKEAVELPLTHPELYEDIGIKPPKGVILYGEPGTGKTLLAKAVANSTSATFLRVVGSELIQKYLGDGPKLVRELFRVADDLSPSIVFIDEIDAVGTKRYDAHSGGEREIQRTMLELLNQLDGFDSRGDVKVILATNRIESLDPALLRPGRIDRKIEFPLPDIKTRRRIFQIHTSKMTLSEDVNLEEFVMTKDEFSGADIKAICTEAGLLALRERRMKVTHPDFKKAKEKVMFKKKEGVPEGLYM.

2 disordered regions span residues 1–55 and 87–108; these read MGQG…LPTV and RLKPQEEKAEEDRSKVDDLRGT. Composition is skewed to basic and acidic residues over residues 12–28 and 87–106; these read QGDRKPDGGDKKEKKFE and RLKPQEEKAEEDRSKVDDLR. Position 229-236 (229-236) interacts with ATP; sequence GEPGTGKT. Glycyl lysine isopeptide (Lys-Gly) (interchain with G-Cter in ubiquitin) cross-links involve residues lysine 296 and lysine 433.

Belongs to the AAA ATPase family. In terms of assembly, component of the 19S regulatory particle (RP/PA700) base subcomplex of the 26S proteasome. The 26S proteasome is composed of a core protease (CP), known as the 20S proteasome, capped at one or both ends by the 19S regulatory particle (RP/PA700). The RP/PA700 complex is composed of at least 17 different subunits in two subcomplexes, the base and the lid, which form the portions proximal and distal to the 20S proteolytic core, respectively. Required for innate immunity. Interacts with UNI. Preferentially expressed in the root and shoot apical meristem.

It is found in the cytoplasm. The protein localises to the P-body. The protein resides in the nucleus. Functionally, the 26S protease is involved in the ATP-dependent degradation of ubiquitinated proteins. The regulatory (or ATPase) complex confers ATP dependency and substrate specificity to the 26S complex. Interacts with transit peptides of proteins targeted to the chloroplast, and may be involved in the degradation of unimported plastid protein precursors. Is required for the maintenance of postembryonic root and shoot meristems. Has a specific role in the regulation of organs size. Acts redundantly with RPT2B in the regulation of gametogenesis. With RPT2B plays a critical role in 26S proteasome assembly. Acts as an upstream signaling component for inducing both defense and morphological phenotypes in the constitutive active uni-1D mutant. Acts as a negative regulator of endoreduplication in trichome cells. May function after the completion of the third endoreduplication step (8C to 16C) mediated by RHL1. Acts as a negative regulator of transcriptional gene silencing (TGS) at specific endogenous genes through DNA methylation. Promotes post-transcriptional gene silencing (PTGS) by limiting the degradation of transgene aberrant RNAs by the RNA quality control (RQC) machinery, thus favoring their entry into cytoplasmic siRNA bodies where they can trigger PTGS. Involved in tolerance to zinc deficiency, possibly through alleviation of oxidative stresses or processing of poly-ubiquitinated proteins. Required for resistance to the fungal pathogen Golovinomyces cichoracearum. This Arabidopsis thaliana (Mouse-ear cress) protein is 26S proteasome regulatory subunit 4 homolog A.